A 560-amino-acid chain; its full sequence is Dihydroxy-acid dehydratase (560 aa).

A disordered region spans residues 1–20 (MGDNLKKRSSMTTDGDNRAP). Cys52 contacts [2Fe-2S] cluster. Asp84 is a binding site for Mg(2+). Cys125 provides a ligand contact to [2Fe-2S] cluster. Asp126 and Lys127 together coordinate Mg(2+). The residue at position 127 (Lys127) is an N6-carboxylysine. Position 197 (Cys197) interacts with [2Fe-2S] cluster. Position 448 (Glu448) interacts with Mg(2+). The Proton acceptor role is filled by Ser474.

It belongs to the IlvD/Edd family. As to quaternary structure, homodimer. [2Fe-2S] cluster serves as cofactor. The cofactor is Mg(2+).

The enzyme catalyses (2R)-2,3-dihydroxy-3-methylbutanoate = 3-methyl-2-oxobutanoate + H2O. It catalyses the reaction (2R,3R)-2,3-dihydroxy-3-methylpentanoate = (S)-3-methyl-2-oxopentanoate + H2O. The protein operates within amino-acid biosynthesis; L-isoleucine biosynthesis; L-isoleucine from 2-oxobutanoate: step 3/4. It functions in the pathway amino-acid biosynthesis; L-valine biosynthesis; L-valine from pyruvate: step 3/4. Functions in the biosynthesis of branched-chain amino acids. Catalyzes the dehydration of (2R,3R)-2,3-dihydroxy-3-methylpentanoate (2,3-dihydroxy-3-methylvalerate) into 2-oxo-3-methylpentanoate (2-oxo-3-methylvalerate) and of (2R)-2,3-dihydroxy-3-methylbutanoate (2,3-dihydroxyisovalerate) into 2-oxo-3-methylbutanoate (2-oxoisovalerate), the penultimate precursor to L-isoleucine and L-valine, respectively. This chain is Dihydroxy-acid dehydratase, found in Leptospira interrogans serogroup Icterohaemorrhagiae serovar Lai (strain 56601).